The following is a 445-amino-acid chain: Phosphoglucosamine mutase (445 aa).

Ser102 serves as the catalytic Phosphoserine intermediate. Residues Ser102, Asp241, Asp243, and Asp245 each contribute to the Mg(2+) site. Ser102 carries the post-translational modification Phosphoserine.

The protein belongs to the phosphohexose mutase family. Mg(2+) is required as a cofactor. Activated by phosphorylation.

It carries out the reaction alpha-D-glucosamine 1-phosphate = D-glucosamine 6-phosphate. Its function is as follows. Catalyzes the conversion of glucosamine-6-phosphate to glucosamine-1-phosphate. This is Phosphoglucosamine mutase from Shewanella oneidensis (strain ATCC 700550 / JCM 31522 / CIP 106686 / LMG 19005 / NCIMB 14063 / MR-1).